Here is a 194-residue protein sequence, read N- to C-terminus: Mitochondrial import inner membrane translocase subunit Tim22 (194 aa).

2 disulfide bridges follow: Cys69/Cys141 and Cys160/Cys179. Transmembrane regions (helical) follow at residues 74-94 (ALAC…TAGI), 123-143 (MSYA…ECLV), and 170-190 (AGLK…AAID).

This sequence belongs to the Tim17/Tim22/Tim23 family. As to quaternary structure, component of the TIM22 complex, whose core is composed of TIMM22, associated with peripheral protein FXC1/TIMM10B and the 70 kDa heterohexamer. In most cases, the 70 kDa complex is composed of TIMM9 and TIMM10 (TIMM10A or TIMM10B). A small fraction of the 70 kDa complex is composed of TIMM8 (TIMM8A/DDP1 or TIMM8B/DDP2) and TIMM13. The TIM22 complex also contains AGK and TIMM29. Interacts directly with TIMM9, TIMM10A and FXC1/TIMM10B. Interacts (when oxidized) with TIMM29; interaction is direct. In terms of processing, disulfide bonds promote efficient assembly of the TIM22 complex.

The protein localises to the mitochondrion inner membrane. In terms of biological role, essential core component of the TIM22 complex, a complex that mediates the import and insertion of multi-pass transmembrane proteins into the mitochondrial inner membrane. In the TIM22 complex, it constitutes the voltage-activated and signal-gated channel. Forms a twin-pore translocase that uses the membrane potential as external driving force in 2 voltage-dependent steps. The polypeptide is Mitochondrial import inner membrane translocase subunit Tim22 (TIMM22) (Bos taurus (Bovine)).